Here is a 59-residue protein sequence, read N- to C-terminus: Large ribosomal subunit protein bL33 (59 aa).

The segment at 26 to 59 (RYTTTKNKKNNTERLVLKKYNPNLKKHTEHKEIK) is disordered.

The protein belongs to the bacterial ribosomal protein bL33 family.

This chain is Large ribosomal subunit protein bL33, found in Chlorobium phaeobacteroides (strain BS1).